The following is a 243-amino-acid chain: Collagen triple helix repeat-containing protein 1 (243 aa).

Residues 1 to 30 (MRPQGPAASPQRLRGLLLLLLLQLPAPSSA) form the signal peptide. In terms of domain architecture, Collagen-like spans 57-90 (QGPAGVPGRDGSPGANGIPGTPGIPGRDGFKGEK). The disordered stretch occupies residues 62-85 (VPGRDGSPGANGIPGTPGIPGRDG). An N-linked (GlcNAc...) asparagine glycan is attached at Asn186.

N-glycosylated. As to expression, isoform 1 is expressed in calcified atherosclerotic plaque and chondrocyte-like cells.

The protein localises to the secreted. The protein resides in the extracellular space. Its subcellular location is the extracellular matrix. In terms of biological role, may act as a negative regulator of collagen matrix deposition. This chain is Collagen triple helix repeat-containing protein 1 (CTHRC1), found in Homo sapiens (Human).